The sequence spans 147 residues: Large ribosomal subunit protein uL15 (147 aa).

Residues methionine 1–arginine 13 are compositionally biased toward basic and acidic residues. A disordered region spans residues methionine 1–leucine 57. 2 stretches are compositionally biased toward gly residues: residues threonine 23–glutamine 35 and serine 42–glycine 52.

It belongs to the universal ribosomal protein uL15 family. Part of the 50S ribosomal subunit.

Functionally, binds to the 23S rRNA. The protein is Large ribosomal subunit protein uL15 of Lactococcus lactis subsp. lactis (strain IL1403) (Streptococcus lactis).